Consider the following 196-residue polypeptide: Sulfur-rich protein (196 aa).

3 helical membrane passes run 34–54 (VTAG…LIGW), 76–96 (ITLL…MFIF), and 105–125 (FWLI…SLCF).

It is found in the membrane. The protein is Sulfur-rich protein (srp) of Chlamydia pneumoniae (Chlamydophila pneumoniae).